A 325-amino-acid polypeptide reads, in one-letter code: Bifunctional nuclease 2 (325 aa).

One can recognise a BFN domain in the interval 119–254; the sequence is CVHNNSQGRN…SLAYSDGIRS (136 aa). Positions 285–320 constitute a UVR domain; sequence EAQEFGLIRNMLIAAVEERYKDAATWRDKLMLLRSK.

This sequence belongs to the bifunctional nuclease family.

It is found in the nucleus. Its function is as follows. Bifunctional nuclease with both RNase and DNase activities. Involved in basal defense response. Participates in abscisic acid-derived callose deposition following infection by a necrotrophic pathogen. This Oryza sativa subsp. japonica (Rice) protein is Bifunctional nuclease 2 (BBD2).